Here is a 418-residue protein sequence, read N- to C-terminus: 3-isopropylmalate dehydratase large subunit (418 aa).

Residues Cys297, Cys357, and Cys360 each coordinate [4Fe-4S] cluster.

It belongs to the aconitase/IPM isomerase family. LeuC type 2 subfamily. As to quaternary structure, heterodimer of LeuC and LeuD. [4Fe-4S] cluster is required as a cofactor.

It catalyses the reaction (2R,3S)-3-isopropylmalate = (2S)-2-isopropylmalate. Its pathway is amino-acid biosynthesis; L-leucine biosynthesis; L-leucine from 3-methyl-2-oxobutanoate: step 2/4. In terms of biological role, catalyzes the isomerization between 2-isopropylmalate and 3-isopropylmalate, via the formation of 2-isopropylmaleate. This is 3-isopropylmalate dehydratase large subunit from Elusimicrobium minutum (strain Pei191).